The primary structure comprises 347 residues: 4-hydroxy-tetrahydrodipicolinate reductase 1, chloroplastic (347 aa).

Residues 1–51 (MATNGLMASSSVFLHRPRIAFASRTNQTVGKYGKGRVSFMGIGTRRLPVVL) constitute a chloroplast transit peptide. Serine 52 is subject to N-acetylserine. NAD(+) contacts are provided by residues 79 to 84 (GCSGKM), 171 to 173 (GTT), and 194 to 197 (SPQM). The Proton donor/acceptor role is filled by histidine 230. The active-site Proton donor is lysine 234. 239–240 (GT) contacts (S)-2,3,4,5-tetrahydrodipicolinate.

It belongs to the DapB family.

Its subcellular location is the plastid. The protein localises to the chloroplast. The enzyme catalyses (S)-2,3,4,5-tetrahydrodipicolinate + NAD(+) + H2O = (2S,4S)-4-hydroxy-2,3,4,5-tetrahydrodipicolinate + NADH + H(+). It carries out the reaction (S)-2,3,4,5-tetrahydrodipicolinate + NADP(+) + H2O = (2S,4S)-4-hydroxy-2,3,4,5-tetrahydrodipicolinate + NADPH + H(+). It functions in the pathway amino-acid biosynthesis; L-lysine biosynthesis via DAP pathway; (S)-tetrahydrodipicolinate from L-aspartate: step 4/4. In terms of biological role, catalyzes the conversion of 4-hydroxy-tetrahydrodipicolinate (HTPA) to tetrahydrodipicolinate. The chain is 4-hydroxy-tetrahydrodipicolinate reductase 1, chloroplastic (DAPB1) from Arabidopsis thaliana (Mouse-ear cress).